The chain runs to 611 residues: Probable potassium transport system protein Kup (611 aa).

The next 13 helical transmembrane spans lie at 24-44, 55-75, 102-122, 143-163, 175-195, 218-238, 252-272, 275-295, 296-316, 344-364, 374-394, 400-420, and 423-443; these read LVFGDIGTSPIYTLAVLFLFL, VSLIFWTLLIMVTVQYTFLAM, VAVFTLLATLGISLMIGECVI, LIAQDWLIFLAILIALGLFLF, FGPVMVIWFLTLFISGAISVA, LLGFFSLSMIVLCATGAEALF, AWGFVFIAVFFSYLGQAAYLL, TDVINPLFEMIFSLSQILYIP, FLLLMIIATIIASQAVISGIF, IYINTVNWLLCIAVICVLLIF, YGLAVTGTMSITGSFMIAIFL, LYMGIALIVTLVDITYFLSTV, and ITHGGYLSLVIAAIPFTIVII.

It belongs to the HAK/KUP transporter (TC 2.A.72) family.

Its subcellular location is the cell membrane. It catalyses the reaction K(+)(in) + H(+)(in) = K(+)(out) + H(+)(out). Transport of potassium into the cell. Likely operates as a K(+):H(+) symporter. This is Probable potassium transport system protein Kup from Methanospirillum hungatei JF-1 (strain ATCC 27890 / DSM 864 / NBRC 100397 / JF-1).